The primary structure comprises 523 residues: Putative glucosylceramidase 1 (523 aa).

An N-terminal signal peptide occupies residues 1 to 23 (MKSRFLLKIFIFLAVFGVDSVRA). N168 carries an N-linked (GlcNAc...) asparagine glycan. E358 serves as the catalytic Nucleophile.

It belongs to the glycosyl hydrolase 30 family.

It carries out the reaction a beta-D-glucosylceramide + H2O = an N-acyl-sphingoid base + D-glucose. It catalyses the reaction a beta-D-glucosyl-(1&lt;-&gt;1')-N-acylsphing-4-enine + H2O = an N-acylsphing-4-enine + D-glucose. The enzyme catalyses an N-acyl-1-beta-D-glucosyl-15-methylhexadecasphing-4-enine + H2O = an N-acyl-15-methylhexadecasphing-4-enine + D-glucose. It functions in the pathway lipid metabolism; sphingolipid metabolism. Glucosylceramidase that catalyzes the hydrolysis of glucosylceramides into free ceramides and glucose. C.elegans contains specific sphingoid bases, which are unique or different in structure compared to the sphingoid bases found in other animals. Two examples of these distinctive compounds are: 15-methylhexadecasphinganine and 15-methylhexadecasphing-4-enine. The chain is Putative glucosylceramidase 1 (gba-1) from Caenorhabditis elegans.